Reading from the N-terminus, the 428-residue chain is Beta-1,3-galactosyl-O-glycosyl-glycoprotein beta-1,6-N-acetylglucosaminyltransferase 4 (428 aa).

The Cytoplasmic segment spans residues 1-12 (MRRCAVLHRLRC). A helical; Signal-anchor for type II membrane protein transmembrane segment spans residues 13–30 (KFYVFVVSLFVVVKLVYL). Residues 31–428 (KISMDNSIYI…QLQQCLRRVS (398 aa)) are Lumenal-facing. N-linked (GlcNAc...) asparagine glycosylation is present at N59. Cystine bridges form between C60–C214, C148–C369, C169–C196, and C378–C410.

Belongs to the glycosyltransferase 14 family.

Its subcellular location is the golgi apparatus membrane. It catalyses the reaction a 3-O-[beta-D-galactosyl-(1-&gt;3)-N-acetyl-alpha-D-galactosaminyl]-L-seryl-[protein] + UDP-N-acetyl-alpha-D-glucosamine = 3-O-{beta-D-galactosyl-(1-&gt;3)-[N-acetyl-beta-D-glucosaminyl-(1-&gt;6)]-N-acetyl-alpha-D-galactosaminyl}-L-seryl-[protein] + UDP + H(+). It carries out the reaction a 3-O-[beta-D-galactosyl-(1-&gt;3)-N-acetyl-alpha-D-galactosaminyl]-L-threonyl-[protein] + UDP-N-acetyl-alpha-D-glucosamine = a 3-O-{beta-D-galactosyl-(1-&gt;3)-[N-acetyl-beta-D-glucosaminyl-(1-&gt;6)]-N-acetyl-alpha-D-galactosaminyl}-L-threonyl-[protein] + UDP + H(+). Its pathway is protein modification; protein glycosylation. Glycosyltransferase that mediates core 2 O-glycan branching, an important step in mucin-type biosynthesis. This chain is Beta-1,3-galactosyl-O-glycosyl-glycoprotein beta-1,6-N-acetylglucosaminyltransferase 4 (gcnt4), found in Danio rerio (Zebrafish).